Here is a 226-residue protein sequence, read N- to C-terminus: Enolase-phosphatase E1 (226 aa).

It belongs to the HAD-like hydrolase superfamily. MasA/MtnC family. In terms of assembly, monomer. Requires Mg(2+) as cofactor.

The enzyme catalyses 5-methylsulfanyl-2,3-dioxopentyl phosphate + H2O = 1,2-dihydroxy-5-(methylsulfanyl)pent-1-en-3-one + phosphate. Its pathway is amino-acid biosynthesis; L-methionine biosynthesis via salvage pathway; L-methionine from S-methyl-5-thio-alpha-D-ribose 1-phosphate: step 3/6. It functions in the pathway amino-acid biosynthesis; L-methionine biosynthesis via salvage pathway; L-methionine from S-methyl-5-thio-alpha-D-ribose 1-phosphate: step 4/6. In terms of biological role, bifunctional enzyme that catalyzes the enolization of 2,3-diketo-5-methylthiopentyl-1-phosphate (DK-MTP-1-P) into the intermediate 2-hydroxy-3-keto-5-methylthiopentenyl-1-phosphate (HK-MTPenyl-1-P), which is then dephosphorylated to form the acireductone 1,2-dihydroxy-3-keto-5-methylthiopentene (DHK-MTPene). The protein is Enolase-phosphatase E1 of Shewanella baltica (strain OS195).